The chain runs to 309 residues: Flavonol sulfotransferase-like (309 aa).

59–64 (KTGTTW) lines the 3'-phosphoadenylyl sulfate pocket. Catalysis depends on H119, which acts as the Proton acceptor. 3'-phosphoadenylyl sulfate contacts are provided by residues R141, S149, Y207, and 274–276 (RKG).

The protein belongs to the sulfotransferase 1 family.

The protein resides in the cytoplasm. The protein is Flavonol sulfotransferase-like of Flaveria bidentis (Coastal plain yellowtops).